Here is a 460-residue protein sequence, read N- to C-terminus: Protein unc-93 homolog A (460 aa).

5 helical membrane passes run 7 to 27, 41 to 61, 68 to 88, 89 to 109, and 139 to 159; these read ILIV…LQSL, SLSV…PIVI, WTIV…FYAS, WYTL…LWAA, and LFFL…SLIF. N-linked (GlcNAc...) asparagine glycosylation is found at asparagine 168 and asparagine 189. 6 consecutive transmembrane segments (helical) span residues 203–223, 292–312, 321–341, 345–365, 390–410, and 412–432; these read TLLG…AVFL, FVGY…LLFG, ICLF…LLLW, PNDF…DAIW, LWES…CVSV, and LYIL…VEYL.

It belongs to the unc-93 family.

It localises to the membrane. In Xenopus laevis (African clawed frog), this protein is Protein unc-93 homolog A (unc93a).